The following is a 79-amino-acid chain: Keratin-associated protein 21-1 (79 aa).

Interacts with hair keratins.

In terms of biological role, in the hair cortex, hair keratin intermediate filaments are embedded in an interfilamentous matrix, consisting of hair keratin-associated proteins (KRTAP), which are essential for the formation of a rigid and resistant hair shaft through their extensive disulfide bond cross-linking with abundant cysteine residues of hair keratins. The matrix proteins include the high-sulfur and high-glycine-tyrosine keratins. The sequence is that of Keratin-associated protein 21-1 (KRTAP21-1) from Homo sapiens (Human).